The primary structure comprises 172 residues: FMN reductase (NADH) RutF 2 (172 aa).

The protein belongs to the non-flavoprotein flavin reductase family. RutF subfamily.

The catalysed reaction is FMNH2 + NAD(+) = FMN + NADH + 2 H(+). Functionally, catalyzes the reduction of FMN to FMNH2 which is used to reduce pyrimidine by RutA via the Rut pathway. This is FMN reductase (NADH) RutF 2 from Methylorubrum extorquens (strain PA1) (Methylobacterium extorquens).